Here is a 726-residue protein sequence, read N- to C-terminus: WD repeat and coiled-coil-containing protein (726 aa).

WD repeat units follow at residues 55–98 and 154–194; these read GQFE…LDKN and KSSG…LNAC. The interval 503–571 is disordered; that stretch reads SYDGDQSPTS…SSPPNFIKHG (69 aa). The span at 506–515 shows a compositional bias: polar residues; the sequence is GDQSPTSSAN. Positions 517-535 are enriched in basic and acidic residues; sequence FDDKRSKLRVESLDTEPKN. Polar residues predominate over residues 550–565; that stretch reads SRPTSPKSECQKSSPP. Positions 581–609 form a coiled coil; sequence SISRNVERLCCNFAHLQQHLSELTDITRN.

The chain is WD repeat and coiled-coil-containing protein (wdcp) from Xenopus tropicalis (Western clawed frog).